The following is a 509-amino-acid chain: Cytochrome P450 monooxygenase aba1 (509 aa).

The signal sequence occupies residues 1 to 31 (MSNSILNLGSFACLLSLGSIVLWYTISAVLA). N-linked (GlcNAc...) asparagine glycosylation occurs at Asn402. Residue Cys451 participates in heme binding. The N-linked (GlcNAc...) asparagine glycan is linked to Asn462.

Belongs to the cytochrome P450 family. Requires heme as cofactor.

It participates in hormone biosynthesis. Cytochrome P450 monooxygenase; part of the gene cluster that mediates the biosynthesis of abscisic acid (ABA), a phytohormone that acts antagonistically toward salicylic acid (SA), jasmonic acid (JA) and ethylene (ETH) signaling, to impede plant defense responses. The first step of the pathway catalyzes the reaction from farnesyl diphosphate to alpha-ionylideneethane performed by the alpha-ionylideneethane synthase aba3 via a three-step reaction mechanism involving 2 neutral intermediates, beta-farnesene and allofarnesene. The cytochrome P450 monooxygenase aba1 might then be involved in the conversion of alpha-ionylideneethane to alpha-ionylideneacetic acid. Alpha-ionylideneacetic acid is further converted to abscisic acid in 2 steps involving the cytochrome P450 monooxygenase aba2 and the short-chain dehydrogenase/reductase aba4, via the intermediates 1'-deoxy-ABA or 1',4'-trans-diol-ABA, depending on the order of action of these 2 enzymes. Aba2 is responsible for the hydroxylation of carbon atom C-1' and aba4 might be involved in the oxidation of the C-4' carbon atom. In Botryotinia fuckeliana (strain B05.10) (Noble rot fungus), this protein is Cytochrome P450 monooxygenase aba1 (aba1).